We begin with the raw amino-acid sequence, 52 residues long: ATP synthase protein 8 (52 aa).

The chain crosses the membrane as a helical span at residues 7–23 (MMWFSLFIMFSMTMMLF).

It belongs to the ATPase protein 8 family. F-type ATPases have 2 components, CF(1) - the catalytic core - and CF(0) - the membrane proton channel.

The protein localises to the mitochondrion membrane. Its function is as follows. Mitochondrial membrane ATP synthase (F(1)F(0) ATP synthase or Complex V) produces ATP from ADP in the presence of a proton gradient across the membrane which is generated by electron transport complexes of the respiratory chain. F-type ATPases consist of two structural domains, F(1) - containing the extramembraneous catalytic core and F(0) - containing the membrane proton channel, linked together by a central stalk and a peripheral stalk. During catalysis, ATP synthesis in the catalytic domain of F(1) is coupled via a rotary mechanism of the central stalk subunits to proton translocation. Part of the complex F(0) domain. Minor subunit located with subunit a in the membrane. The chain is ATP synthase protein 8 (MT-ATP8) from Locusta migratoria (Migratory locust).